The primary structure comprises 497 residues: Glycogen synthase (497 aa).

Lys-15 provides a ligand contact to ADP-alpha-D-glucose.

The protein belongs to the glycosyltransferase 1 family. Bacterial/plant glycogen synthase subfamily.

It carries out the reaction [(1-&gt;4)-alpha-D-glucosyl](n) + ADP-alpha-D-glucose = [(1-&gt;4)-alpha-D-glucosyl](n+1) + ADP + H(+). It participates in glycan biosynthesis; glycogen biosynthesis. Its function is as follows. Synthesizes alpha-1,4-glucan chains using ADP-glucose. In Thermodesulfovibrio yellowstonii (strain ATCC 51303 / DSM 11347 / YP87), this protein is Glycogen synthase.